The following is a 405-amino-acid chain: L-carnitine CoA-transferase (405 aa).

Residues Lys-97 and Arg-104 each coordinate CoA. Asp-169 functions as the Nucleophile in the catalytic mechanism.

Belongs to the CoA-transferase III family. CaiB subfamily. As to quaternary structure, homodimer.

The protein resides in the cytoplasm. It carries out the reaction crotonobetainyl-CoA + (R)-carnitine = crotonobetaine + (R)-carnitinyl-CoA. The enzyme catalyses 4-(trimethylamino)butanoyl-CoA + (R)-carnitine = (R)-carnitinyl-CoA + 4-(trimethylamino)butanoate. It participates in amine and polyamine metabolism; carnitine metabolism. Functionally, catalyzes the reversible transfer of the CoA moiety from gamma-butyrobetainyl-CoA to L-carnitine to generate L-carnitinyl-CoA and gamma-butyrobetaine. Is also able to catalyze the reversible transfer of the CoA moiety from gamma-butyrobetainyl-CoA or L-carnitinyl-CoA to crotonobetaine to generate crotonobetainyl-CoA. This Escherichia coli (strain SE11) protein is L-carnitine CoA-transferase.